The sequence spans 613 residues: Laccase 1 (613 aa).

An N-terminal signal peptide occupies residues 1 to 20; sequence MSRFARLLLIVALFFTGAWA. Plastocyanin-like domains are found at residues 29 to 142 and 171 to 359; these read ITWK…IRPK and YLVV…MRIP. N-linked (GlcNAc...) asparagine glycosylation is present at Asn-74. His-78, His-80, His-122, and His-124 together coordinate Cu cation. 5 N-linked (GlcNAc...) asparagine glycosylation sites follow: Asn-256, Asn-279, Asn-444, Asn-468, and Asn-484. The region spanning 468-598 is the Plastocyanin-like 3 domain; that stretch reads NATRDTENDG…GGMGIAILDG (131 aa). The Cu cation site is built by His-506, His-509, and His-511. An N-linked (GlcNAc...) asparagine glycan is attached at Asn-526. Residues His-580, Cys-581, His-582, and His-586 each contribute to the Cu cation site.

It belongs to the multicopper oxidase family. Cu cation is required as a cofactor.

It is found in the cell surface. Its pathway is pigment biosynthesis. Laccase; part of the Pks1 gene cluster that mediates the biosynthesis of an anthraquinone derivative pigment that contributes to conidial pigmentation that provides protection from UV radiation, heat and cold stress. The polyketide synthase Pks1 produces 1-acetyl-2,4,6,8-tetrahydroxy-9,10-anthraquinone though condensation of acetyl-CoA with malonyl-CoA. The dehydratase EthD and the laccase Mlac1 further convert the anthraquinone derivative into the final conidial pigment. This chain is Laccase 1, found in Metarhizium guizhouense (strain ARSEF 977).